Here is a 361-residue protein sequence, read N- to C-terminus: UDP-N-acetylglucosamine--N-acetylmuramyl-(pentapeptide) pyrophosphoryl-undecaprenol N-acetylglucosamine transferase (361 aa).

UDP-N-acetyl-alpha-D-glucosamine-binding positions include 13–15 (TGG), Asn125, Arg167, Ser196, Ile251, 270–275 (ALTVTE), and Gln296.

The protein belongs to the glycosyltransferase 28 family. MurG subfamily.

The protein localises to the cell inner membrane. The enzyme catalyses di-trans,octa-cis-undecaprenyl diphospho-N-acetyl-alpha-D-muramoyl-L-alanyl-D-glutamyl-meso-2,6-diaminopimeloyl-D-alanyl-D-alanine + UDP-N-acetyl-alpha-D-glucosamine = di-trans,octa-cis-undecaprenyl diphospho-[N-acetyl-alpha-D-glucosaminyl-(1-&gt;4)]-N-acetyl-alpha-D-muramoyl-L-alanyl-D-glutamyl-meso-2,6-diaminopimeloyl-D-alanyl-D-alanine + UDP + H(+). Its pathway is cell wall biogenesis; peptidoglycan biosynthesis. Functionally, cell wall formation. Catalyzes the transfer of a GlcNAc subunit on undecaprenyl-pyrophosphoryl-MurNAc-pentapeptide (lipid intermediate I) to form undecaprenyl-pyrophosphoryl-MurNAc-(pentapeptide)GlcNAc (lipid intermediate II). This chain is UDP-N-acetylglucosamine--N-acetylmuramyl-(pentapeptide) pyrophosphoryl-undecaprenol N-acetylglucosamine transferase, found in Psychrobacter arcticus (strain DSM 17307 / VKM B-2377 / 273-4).